Reading from the N-terminus, the 187-residue chain is MYAIIRTGGKQYKVQAGDVVQVDKLEQALGAEFEINEVLMVGGESTAVGQPLVKGAKVTVVVTKQAKTRKEIVFKKKRRQGYRKFATHKQEFTELFVKAISFDGKTAKSDEAATVVDVKAVRAEKAQARVAARKERAANKGPAEVVKKAAKKVAKKKVAKKAVKKTVKKATKTGAKKKAAKKTSKKA.

Positions 157–187 (KVAKKAVKKTVKKATKTGAKKKAAKKTSKKA) are disordered.

This sequence belongs to the bacterial ribosomal protein bL21 family. In terms of assembly, part of the 50S ribosomal subunit. Contacts protein L20.

Functionally, this protein binds to 23S rRNA in the presence of protein L20. The polypeptide is Large ribosomal subunit protein bL21 (Bdellovibrio bacteriovorus (strain ATCC 15356 / DSM 50701 / NCIMB 9529 / HD100)).